Reading from the N-terminus, the 202-residue chain is Casparian strip membrane protein 4 (202 aa).

The Cytoplasmic segment spans residues 1-40; that stretch reads MKSDSIAVDVPAESSSAIKGKAPLLGLARDHTGSGGYKRG. The chain crosses the membrane as a helical span at residues 41–61; sequence LSIFDFLLRLAAIVAALAAAA. At 62–90 the chain is on the extracellular side; it reads TMGTSDETLPFFTQFLQFEASYDDLPTFQ. Residues 91–111 form a helical membrane-spanning segment; the sequence is FFVVAIAIVTGYLVLSLPFSV. Over 112 to 130 the chain is Cytoplasmic; the sequence is VTIVRPLAVAPRLLLLVLD. Residues 131–151 form a helical membrane-spanning segment; that stretch reads TAALALDTAAASAAAAIVYLA. Residues 152-176 lie on the Extracellular side of the membrane; that stretch reads HNGNTNTNWLPICQQFGDFCQKTSG. Residues 177–197 traverse the membrane as a helical segment; that stretch reads AVVSAFASVTFLAILVVISGV. The Cytoplasmic segment spans residues 198 to 202; that stretch reads SLKRP.

It belongs to the Casparian strip membrane proteins (CASP) family. In terms of assembly, homodimer and heterodimers.

Its subcellular location is the cell membrane. Regulates membrane-cell wall junctions and localized cell wall deposition. Required for establishment of the Casparian strip membrane domain (CSD) and the subsequent formation of Casparian strips, a cell wall modification of the root endodermis that determines an apoplastic barrier between the intraorganismal apoplasm and the extraorganismal apoplasm and prevents lateral diffusion. The polypeptide is Casparian strip membrane protein 4 (Arabidopsis lyrata subsp. lyrata (Lyre-leaved rock-cress)).